The primary structure comprises 257 residues: Outer membrane protein YaiO (257 aa).

An N-terminal signal peptide occupies residues 1–19; it reads MIKRTLLAAAIFSALPAYA.

It localises to the cell outer membrane. This Escherichia coli (strain K12) protein is Outer membrane protein YaiO (yaiO).